Consider the following 191-residue polypeptide: Calcium-binding protein CML42 (191 aa).

EF-hand domains are found at residues 25-60 (LNALRLQRIFDLFDKNGDGFITVEELSQALTRLGLN), 116-151 (ENESDLAEAFKVFDENGDGFISARELQTVLKKLGLP), and 154-189 (GEMERVEKMIVSVDRNQDGRVDFFEFKNMMRTVVIP). Asp-38, Asn-40, Asp-42, Glu-49, Asp-129, Asn-131, Asp-133, Glu-140, Asp-167, Asn-169, Asp-171, Arg-173, and Glu-178 together coordinate Ca(2+).

In terms of assembly, interacts with KIC. In terms of tissue distribution, expressed in seedling shoots, roots, rosette leaves and flowers. Expressed in the leaf trichome support cells.

Its function is as follows. Probable calcium sensor that binds calcium in vitro. Involved in the regulation of trichome branching. The sequence is that of Calcium-binding protein CML42 (CML42) from Arabidopsis thaliana (Mouse-ear cress).